The chain runs to 1048 residues: uncharacterized protein (1048 aa).

A disordered region spans residues 601–629 (ENQINEEQQTNVENEQQTEQQFENEDKET). Positions 605–621 (NEEQQTNVENEQQTEQQ) are enriched in low complexity.

This is an uncharacterized protein from Methanocaldococcus jannaschii (strain ATCC 43067 / DSM 2661 / JAL-1 / JCM 10045 / NBRC 100440) (Methanococcus jannaschii).